The chain runs to 457 residues: Cysteine--tRNA ligase (457 aa).

C30 is a Zn(2+) binding site. The 'HIGH' region motif lies at 32 to 42; it reads PTVYAPAHIGN. Residues C221, H246, and E250 each coordinate Zn(2+). The 'KMSKS' region motif lies at 278–282; the sequence is KMSKS. K281 lines the ATP pocket.

This sequence belongs to the class-I aminoacyl-tRNA synthetase family. In terms of assembly, monomer. It depends on Zn(2+) as a cofactor.

It is found in the cytoplasm. It catalyses the reaction tRNA(Cys) + L-cysteine + ATP = L-cysteinyl-tRNA(Cys) + AMP + diphosphate. This is Cysteine--tRNA ligase from Opitutus terrae (strain DSM 11246 / JCM 15787 / PB90-1).